Reading from the N-terminus, the 327-residue chain is Dolichyl-phosphate beta-glucosyltransferase (327 aa).

Over 1-15 (MIDLFINIASFTIYG) the chain is Lumenal. Residues 16-36 (IPVIPLFIIVFVILSYYLLLL) traverse the membrane as a helical segment. At 37 to 327 (HDESPLWLEK…YLLGIWKIKS (291 aa)) the chain is on the cytoplasmic side.

It belongs to the glycosyltransferase 2 family.

It localises to the endoplasmic reticulum membrane. It carries out the reaction a di-trans,poly-cis-dolichyl phosphate + UDP-alpha-D-glucose = a di-trans,poly-cis-dolichyl beta-D-glucosyl phosphate + UDP. The protein operates within protein modification; protein glycosylation. In terms of biological role, endoplasmic reticulum membrane-bound UDP-glucose:dolichyl-phosphate glucosyltransferase involved in protein N-linked glycosylation. The polypeptide is Dolichyl-phosphate beta-glucosyltransferase (alg5) (Dictyostelium discoideum (Social amoeba)).